The chain runs to 390 residues: Elongation factor Ts, mitochondrial (390 aa).

The protein belongs to the EF-Ts family.

The protein resides in the mitochondrion. In terms of biological role, associates with the EF-Tu.GDP complex and induces the exchange of GDP to GTP. It remains bound to the aminoacyl-tRNA.EF-Tu.GTP complex up to the GTP hydrolysis stage on the ribosome. This is Elongation factor Ts, mitochondrial from Plasmodium falciparum (isolate 3D7).